Consider the following 179-residue polypeptide: Peptide deformylase 2 (179 aa).

Residues cysteine 104 and histidine 146 each coordinate Fe cation. The active site involves glutamate 147. Histidine 150 provides a ligand contact to Fe cation.

Belongs to the polypeptide deformylase family. Requires Fe(2+) as cofactor.

It carries out the reaction N-terminal N-formyl-L-methionyl-[peptide] + H2O = N-terminal L-methionyl-[peptide] + formate. Functionally, removes the formyl group from the N-terminal Met of newly synthesized proteins. Requires at least a dipeptide for an efficient rate of reaction. N-terminal L-methionine is a prerequisite for activity but the enzyme has broad specificity at other positions. The chain is Peptide deformylase 2 from Streptomyces coelicolor (strain ATCC BAA-471 / A3(2) / M145).